The chain runs to 241 residues: Methylthioribulose-1-phosphate dehydratase (241 aa).

Cysteine 96 provides a ligand contact to substrate. Residues histidine 114 and histidine 116 each contribute to the Zn(2+) site. The active-site Proton donor/acceptor is glutamate 138. Position 194 (histidine 194) interacts with Zn(2+).

Belongs to the aldolase class II family. MtnB subfamily. Zn(2+) serves as cofactor.

Its subcellular location is the cytoplasm. The catalysed reaction is 5-(methylsulfanyl)-D-ribulose 1-phosphate = 5-methylsulfanyl-2,3-dioxopentyl phosphate + H2O. It participates in amino-acid biosynthesis; L-methionine biosynthesis via salvage pathway; L-methionine from S-methyl-5-thio-alpha-D-ribose 1-phosphate: step 2/6. Catalyzes the dehydration of methylthioribulose-1-phosphate (MTRu-1-P) into 2,3-diketo-5-methylthiopentyl-1-phosphate (DK-MTP-1-P). Functions in the methionine salvage pathway. May play a role in apoptosis. The chain is Methylthioribulose-1-phosphate dehydratase from Danio rerio (Zebrafish).